We begin with the raw amino-acid sequence, 207 residues long: Superoxide dismutase [Mn] (207 aa).

Residues His-28, His-76, Asp-160, and His-164 each coordinate Mn(2+).

This sequence belongs to the iron/manganese superoxide dismutase family. It depends on Mn(2+) as a cofactor.

It carries out the reaction 2 superoxide + 2 H(+) = H2O2 + O2. In terms of biological role, destroys superoxide anion radicals which are normally produced within the cells and which are toxic to biological systems. This is Superoxide dismutase [Mn] (sodA) from Mycobacterium avium.